A 514-amino-acid polypeptide reads, in one-letter code: Glutamate--cysteine ligase, chloroplastic (514 aa).

A chloroplast-targeting transit peptide spans 1-55 (MALLSQAGGAYTVPSGHVSSRTGTKTVSGCVNVLRMKETYVSSYSRTLSTKSMLK). Disulfide bonds link C178/C398 and C341/C356.

This sequence belongs to the carboxylate-amine ligase family. Glutamate--cysteine ligase type 2 subfamily. In terms of assembly, homodimer or monomer when oxidized or reduced, respectively. Post-translationally, the Cys-178-Cys-398 disulfide bridge is known to modulate the enzyme activity according to the redox status. The oxidized form constitutes the active enzyme.

The protein localises to the plastid. Its subcellular location is the chloroplast. The catalysed reaction is L-cysteine + L-glutamate + ATP = gamma-L-glutamyl-L-cysteine + ADP + phosphate + H(+). It participates in sulfur metabolism; glutathione biosynthesis; glutathione from L-cysteine and L-glutamate: step 1/2. Its function is as follows. Participates in the detoxification process. In Brassica juncea (Indian mustard), this protein is Glutamate--cysteine ligase, chloroplastic (GSH1).